Reading from the N-terminus, the 179-residue chain is Large ribosomal subunit protein uL5 (179 aa).

It belongs to the universal ribosomal protein uL5 family. Part of the 50S ribosomal subunit; part of the 5S rRNA/L5/L18/L25 subcomplex. Contacts the 5S rRNA and the P site tRNA. Forms a bridge to the 30S subunit in the 70S ribosome.

Functionally, this is one of the proteins that bind and probably mediate the attachment of the 5S RNA into the large ribosomal subunit, where it forms part of the central protuberance. In the 70S ribosome it contacts protein S13 of the 30S subunit (bridge B1b), connecting the 2 subunits; this bridge is implicated in subunit movement. Contacts the P site tRNA; the 5S rRNA and some of its associated proteins might help stabilize positioning of ribosome-bound tRNAs. The sequence is that of Large ribosomal subunit protein uL5 from Paraburkholderia phymatum (strain DSM 17167 / CIP 108236 / LMG 21445 / STM815) (Burkholderia phymatum).